The following is a 608-amino-acid chain: DNA mismatch repair protein MutL (608 aa).

Belongs to the DNA mismatch repair MutL/HexB family.

Its function is as follows. This protein is involved in the repair of mismatches in DNA. It is required for dam-dependent methyl-directed DNA mismatch repair. May act as a 'molecular matchmaker', a protein that promotes the formation of a stable complex between two or more DNA-binding proteins in an ATP-dependent manner without itself being part of a final effector complex. This is DNA mismatch repair protein MutL from Anoxybacillus flavithermus (strain DSM 21510 / WK1).